A 137-amino-acid chain; its full sequence is Envelope glycoprotein L (137 aa).

A signal peptide spans 1-22 (MRAVGVFLAICLVTIFVLPTWG). Residues 23–128 (NWAYPCCHVT…SVEDLFGANL (106 aa)) are interaction with gH. 2 disulfide bridges follow: C28-C56 and C29-C79.

It belongs to the herpesviridae glycoprotein L family. As to quaternary structure, interacts with glycoprotein H (gH); this interaction is necessary for the correct processing and cell surface expression of gH. The heterodimer gH/gL seems to interact with gB trimers during fusion. The heterodimer gH/gL interacts with host EPHA2 to facilitate virus internalization and fusion.

It is found in the virion membrane. The protein localises to the host cell membrane. It localises to the host Golgi apparatus. Its subcellular location is the host trans-Golgi network. Its function is as follows. The heterodimer glycoprotein H-glycoprotein L is required for the fusion of viral and plasma membranes leading to virus entry into the host cell. Acts as a functional inhibitor of gH and maintains gH in an inhibited form. Upon binding to host integrins, gL dissociates from gH leading to activation of the viral fusion glycoproteins gB and gH. Fusion of EBV with B-lymphocytes requires the additional receptor-binding protein gp42, which forms a complex with gH/gL. The heterodimer gH/gL targets also host EPHA2 to promote viral entry. This is Envelope glycoprotein L from Homo sapiens (Human).